Reading from the N-terminus, the 249-residue chain is DNA polymerase sliding clamp 1 (249 aa).

It belongs to the PCNA family. As to quaternary structure, forms heterodimers with PCNA2, which then recruit PCNA3; does not form homotrimers. The heterodimers interact with RfcS homotetramers. Heterotrimer which circularizes head-to-tail (head is at N-terminus, tail is at C-terminus) to form a toroid; DNA passes through its center. Replication factor C (RFC) is required to load the toroid on the DNA. Heterotrimer interacts, probably via this subunit, with flap endonuclease 1 (fen), Hjc, Dpo4, and XPF.

Its function is as follows. One of the sliding clamp subunits that acts as a moving platform for DNA processing. Responsible for tethering the catalytic subunit of DNA polymerase to DNA during high-speed replication. Heterotrimer stimulates the Holliday junction resolvase Hjc. DNA polymerase I, DNA ligase and the flap endonuclease may be constitutively associated with the PCNA heterotrimer forming a scanning complex able to couple DNA synthesis and Okazaki fragment maturation. The polypeptide is DNA polymerase sliding clamp 1 (Saccharolobus solfataricus (strain ATCC 35092 / DSM 1617 / JCM 11322 / P2) (Sulfolobus solfataricus)).